The chain runs to 319 residues: Taste receptor type 2 member 30 (319 aa).

Position 1 (Met1) is a topological domain, extracellular. Residues 2-22 (ITFLPIIFSILIVVIFVIGNF) form a helical membrane-spanning segment. The Cytoplasmic segment spans residues 23 to 46 (ANGFIALVNSIEWVKRQKISFVDQ). Residues 47 to 67 (ILTALAVSRVGLLWVLLLHWY) traverse the membrane as a helical segment. Residues 68–86 (ATQLNPAFYSVEVRITAYN) lie on the Extracellular side of the membrane. Residues 87–107 (VWAVTNHFSSWLATSLSMFYL) form a helical membrane-spanning segment. Residues 108–126 (LRIANFSNLIFLRIKRRVK) lie on the Cytoplasmic side of the membrane. A helical transmembrane segment spans residues 127 to 147 (SVVLVILLGPLLFLVCHLFVI). Residues 148-178 (NMDETVWTKEYEGNVTWKIKLRSAMYHSNMT) lie on the Extracellular side of the membrane. N-linked (GlcNAc...) asparagine glycans are attached at residues Asn161 and Asn176. A helical membrane pass occupies residues 179-199 (LTMLANFVPLTLTLISFLLLI). Over 200–229 (CSLCKHLKKMQLHGKGSQDPSTKVHIKALQ) the chain is Cytoplasmic. A helical transmembrane segment spans residues 230–250 (TVTSFLLLCAIYFLSMIISVC). Topologically, residues 251–259 (NFGRLEKQP) are extracellular. A helical membrane pass occupies residues 260 to 280 (VFMFCQAIIFSYPSTHPFILI). The Cytoplasmic portion of the chain corresponds to 281–319 (LGNKKLKQIFLSVLRHVRYWVKDRSLRLHRFTRGALCVF).

It belongs to the G-protein coupled receptor T2R family. Expressed in subsets of taste receptor cells of the tongue and exclusively in gustducin-positive cells.

It is found in the membrane. Functionally, receptor that may play a role in the perception of bitterness and is gustducin-linked. May play a role in sensing the chemical composition of the gastrointestinal content. The activity of this receptor may stimulate alpha gustducin, mediate PLC-beta-2 activation and lead to the gating of TRPM5. The protein is Taste receptor type 2 member 30 (TAS2R30) of Homo sapiens (Human).